Reading from the N-terminus, the 207-residue chain is Large ribosomal subunit protein bL25 (207 aa).

The interval 1–20 is disordered; the sequence is MANHQIKAQRRKDEGKGASR.

The protein belongs to the bacterial ribosomal protein bL25 family. CTC subfamily. As to quaternary structure, part of the 50S ribosomal subunit; part of the 5S rRNA/L5/L18/L25 subcomplex. Contacts the 5S rRNA. Binds to the 5S rRNA independently of L5 and L18.

Its function is as follows. This is one of the proteins that binds to the 5S RNA in the ribosome where it forms part of the central protuberance. In Xylella fastidiosa (strain M12), this protein is Large ribosomal subunit protein bL25.